Reading from the N-terminus, the 309-residue chain is MARKKISIIGAGNVGATAAHWAASKELGDIVLLDIMEGIPQGKGLDLMEASPVEGFDCHIIGTNSYADTANSDVVVITAGIARKPGMSRDDLITTNTKIVADCAKKAAEQSPDSIIIIVSNPLDAMTYVAQKASGFPTNRVFGMSGILDAARFKTFIAMEMGCSVKDVSTILLGGHGDDMVPLPSYTFIGGIPIRQLLPEEKIQAMVDRARKGGAEIVAYLKTGSAYYAPSASVIQMVEAILKDQKRILPVAAYLNGEYGYEGIYTSVPVMLGANGVEKVFEIELTAEERQLFAKSVDSVKNLIAVTGM.

NAD(+) is bound by residues 10 to 15 (GAGNVG) and aspartate 34. Substrate contacts are provided by arginine 83 and arginine 89. NAD(+) contacts are provided by residues asparagine 96 and 119 to 121 (VSN). Residues asparagine 121 and arginine 152 each contribute to the substrate site. Residue histidine 176 is the Proton acceptor of the active site.

This sequence belongs to the LDH/MDH superfamily. MDH type 3 family.

It carries out the reaction (S)-malate + NAD(+) = oxaloacetate + NADH + H(+). In terms of biological role, catalyzes the reversible oxidation of malate to oxaloacetate. In Heliobacterium modesticaldum (strain ATCC 51547 / Ice1), this protein is Malate dehydrogenase.